The following is a 206-amino-acid chain: Small ribosomal subunit protein uS4 (206 aa).

The 62-residue stretch at 96 to 157 (RRLDNVVYRM…KAKKQVRIQD (62 aa)) folds into the S4 RNA-binding domain.

The protein belongs to the universal ribosomal protein uS4 family. In terms of assembly, part of the 30S ribosomal subunit. Contacts protein S5. The interaction surface between S4 and S5 is involved in control of translational fidelity.

Its function is as follows. One of the primary rRNA binding proteins, it binds directly to 16S rRNA where it nucleates assembly of the body of the 30S subunit. Functionally, with S5 and S12 plays an important role in translational accuracy. This Thioalkalivibrio sulfidiphilus (strain HL-EbGR7) protein is Small ribosomal subunit protein uS4.